The sequence spans 637 residues: Poly [ADP-ribose] polymerase 2 (637 aa).

The DNA-binding element occupies Met1–Thr140. Positions Ala2–Ile36 constitute an SAP 1 domain. Residues Ala35–Lys46 show a composition bias toward basic and acidic residues. Residues Ala35 to Asp56 form a disordered region. Residues Lys41–Lys62 carry the Nuclear localization signal motif. An SAP 2 domain is found at Phe69–Ala103. Polar residues predominate over residues Val106–Thr117. The segment at Val106 to Glu134 is disordered. Positions Asp118–Phe127 are enriched in acidic residues. Positions Gln158–Tyr255 constitute a WGR domain. The PARP alpha-helical domain occupies Gln286–Ser404. The region spanning Asp412 to His637 is the PARP catalytic domain.

This sequence belongs to the ARTD/PARP family.

The protein localises to the nucleus. The catalysed reaction is NAD(+) + (ADP-D-ribosyl)n-acceptor = nicotinamide + (ADP-D-ribosyl)n+1-acceptor + H(+).. It carries out the reaction L-aspartyl-[protein] + NAD(+) = 4-O-(ADP-D-ribosyl)-L-aspartyl-[protein] + nicotinamide. It catalyses the reaction L-glutamyl-[protein] + NAD(+) = 5-O-(ADP-D-ribosyl)-L-glutamyl-[protein] + nicotinamide. Functionally, involved in the base excision repair (BER) pathway, by catalyzing the poly(ADP-ribosyl)ation of a limited number of acceptor proteins involved in chromatin architecture and in DNA metabolism. This modification follows DNA damages and appears as an obligatory step in a detection/signaling pathway leading to the reparation of DNA strand breaks. This is Poly [ADP-ribose] polymerase 2 (PARP2) from Arabidopsis thaliana (Mouse-ear cress).